Here is a 445-residue protein sequence, read N- to C-terminus: MSSIDPATFAAQFAQIEIQPFKQRYQLQTNTYQSQLSALGKVESAMREFRTALNEMNSSTNSIIKNSTSISQEGYFTANADAKALSGSYQIFVEQVATSHQVSTGMPADLDATTEIPKTGNLEFTINGKTMTIDLSTVDTDGDGVTTVSDLTKAINNNSDNPGVNATLVRSNGQTHFMLSSTETGVANQINVSATGTGQAWFEDAFTNLSQISAPQDAVIWLGAEKTGLKLTNSSNTFEGVIDGVDITVTKAQTSGETAIGLGIGADDEATKEQLNKFVDAYNTLISTIDEHTQIGSEDKKRGVLASDPTMRSIESQLSSLVRGEHGGMRLSEIGVTLDRHGKLKVDQEKFAEAQKNNSAGLEAMFNGDGALLDSMDAMAEPFLKFSSGAFKSRKEALQANLDRLSDKQTTLERKYDMSYKRYLKQFTQMNTLMTQMNQTMSMFG.

The stretch at 388 to 423 (SGAFKSRKEALQANLDRLSDKQTTLERKYDMSYKRY) forms a coiled coil.

The protein belongs to the FliD family. In terms of assembly, homopentamer.

The protein localises to the secreted. It is found in the bacterial flagellum. Required for the morphogenesis and for the elongation of the flagellar filament by facilitating polymerization of the flagellin monomers at the tip of growing filament. Forms a capping structure, which prevents flagellin subunits (transported through the central channel of the flagellum) from leaking out without polymerization at the distal end. Essential for swarming motility. In Vibrio parahaemolyticus serotype O3:K6 (strain RIMD 2210633), this protein is Lateral flagellar hook-associated protein 2 (fliDL).